A 129-amino-acid chain; its full sequence is Large ribosomal subunit protein bL17 (129 aa).

Belongs to the bacterial ribosomal protein bL17 family. In terms of assembly, part of the 50S ribosomal subunit. Contacts protein L32.

This chain is Large ribosomal subunit protein bL17, found in Desulfotalea psychrophila (strain LSv54 / DSM 12343).